A 469-amino-acid polypeptide reads, in one-letter code: 6-phosphofructo-2-kinase/fructose-2,6-bisphosphatase 4 (469 aa).

Positions 1–249 (MASPRELTQN…YYLMNIHVTP (249 aa)) are 6-phosphofructo-2-kinase. 46 to 54 (GLPARGKTY) contributes to the ATP binding site. 2 residues coordinate beta-D-fructose 6-phosphate: arginine 79 and arginine 103. The active site involves aspartate 129. Residues threonine 131 and arginine 137 each coordinate beta-D-fructose 6-phosphate. The active site involves cysteine 159. 168 to 173 (NIVQVK) provides a ligand contact to ATP. Residues lysine 173, arginine 194, and tyrosine 198 each coordinate beta-D-fructose 6-phosphate. Positions 250–469 (RSIYLCRHGE…EALVTVPAHQ (220 aa)) are fructose-2,6-bisphosphatase. Arginine 256 lines the beta-D-fructose 2,6-bisphosphate pocket. Histidine 257 serves as the catalytic Tele-phosphohistidine intermediate. Residues asparagine 263, glycine 269, and arginine 306 each coordinate beta-D-fructose 2,6-bisphosphate. Residue glutamate 326 is the Proton donor/acceptor of the active site. Beta-D-fructose 2,6-bisphosphate contacts are provided by tyrosine 337, arginine 351, lysine 355, tyrosine 366, glutamine 392, and arginine 396. 348-351 (FALR) provides a ligand contact to ATP. ATP-binding positions include 392 to 396 (QAVMR) and tyrosine 428. Phosphothreonine; by PKC is present on threonine 444.

The protein in the C-terminal section; belongs to the phosphoglycerate mutase family. In terms of assembly, homodimer.

The enzyme catalyses beta-D-fructose 2,6-bisphosphate + H2O = beta-D-fructose 6-phosphate + phosphate. It catalyses the reaction beta-D-fructose 6-phosphate + ATP = beta-D-fructose 2,6-bisphosphate + ADP + H(+). The most important regulatory mechanism of these opposing activities is by phosphorylation and dephosphorylation of the enzyme. Its function is as follows. Synthesis and degradation of fructose 2,6-bisphosphate. This Macaca fascicularis (Crab-eating macaque) protein is 6-phosphofructo-2-kinase/fructose-2,6-bisphosphatase 4 (PFKFB4).